The primary structure comprises 395 residues: Phosphopentomutase (395 aa).

6 residues coordinate Mn(2+): aspartate 12, aspartate 289, histidine 294, aspartate 330, histidine 331, and histidine 342.

This sequence belongs to the phosphopentomutase family. The cofactor is Mn(2+).

It is found in the cytoplasm. The catalysed reaction is 2-deoxy-alpha-D-ribose 1-phosphate = 2-deoxy-D-ribose 5-phosphate. It catalyses the reaction alpha-D-ribose 1-phosphate = D-ribose 5-phosphate. Its pathway is carbohydrate degradation; 2-deoxy-D-ribose 1-phosphate degradation; D-glyceraldehyde 3-phosphate and acetaldehyde from 2-deoxy-alpha-D-ribose 1-phosphate: step 1/2. In terms of biological role, isomerase that catalyzes the conversion of deoxy-ribose 1-phosphate (dRib-1-P) and ribose 1-phosphate (Rib-1-P) to deoxy-ribose 5-phosphate (dRib-5-P) and ribose 5-phosphate (Rib-5-P), respectively. This is Phosphopentomutase from Levilactobacillus brevis (strain ATCC 367 / BCRC 12310 / CIP 105137 / JCM 1170 / LMG 11437 / NCIMB 947 / NCTC 947) (Lactobacillus brevis).